A 208-amino-acid polypeptide reads, in one-letter code: LexA repressor (208 aa).

The H-T-H motif DNA-binding region spans 30 to 50 (VREICAAVGLSSTSTVHGHLS). Residues Ser129 and Lys167 each act as for autocatalytic cleavage activity in the active site.

This sequence belongs to the peptidase S24 family. Homodimer.

The catalysed reaction is Hydrolysis of Ala-|-Gly bond in repressor LexA.. Its function is as follows. Represses a number of genes involved in the response to DNA damage (SOS response), including recA and lexA. In the presence of single-stranded DNA, RecA interacts with LexA causing an autocatalytic cleavage which disrupts the DNA-binding part of LexA, leading to derepression of the SOS regulon and eventually DNA repair. The protein is LexA repressor of Lactobacillus acidophilus (strain ATCC 700396 / NCK56 / N2 / NCFM).